The chain runs to 323 residues: uncharacterized protein (323 aa).

One can recognise a TIR domain in the interval 1-142; sequence MPSVFFSYSH…QVAKAVREAA (142 aa).

This is an uncharacterized protein from Sinorhizobium fredii (strain NBRC 101917 / NGR234).